Consider the following 351-residue polypeptide: Transmembrane protein 185-like (351 aa).

Transmembrane regions (helical) follow at residues 16–36, 41–61, 81–101, 113–133, 154–174, 178–198, 212–232, and 244–264; these read LIYA…DGII, WAVF…ASVG, FKAM…EVLV, WLLV…ACVW, FIFI…VVCV, ILMS…VLFL, ITMA…EILL, and YVPV…TTFG.

It belongs to the TMEM185 family.

The protein localises to the membrane. The chain is Transmembrane protein 185-like from Danio rerio (Zebrafish).